The following is a 361-amino-acid chain: Mitogen-activated protein kinase 1 (361 aa).

Residues 28-316 (YINLAYIGEG…VEAALAHPYL (289 aa)) form the Protein kinase domain. ATP-binding positions include 34–42 (IGEGAYGMV) and K57. D152 acts as the Proton acceptor in catalysis. T188 carries the phosphothreonine modification. The TXY signature appears at 188-190 (TEY). The residue at position 190 (Y190) is a Phosphotyrosine.

This sequence belongs to the protein kinase superfamily. CMGC Ser/Thr protein kinase family. MAP kinase subfamily. In terms of assembly, interacts with CDK2AP2. Mg(2+) is required as a cofactor. Post-translationally, dually phosphorylated on Thr-188 and Tyr-190, which activates the enzyme. As to expression, expressed in the central nervous system, kidney, liver, intestine and the hematopoietic system. Also found in heart, muscle, pancreas and lung.

The protein localises to the cytoplasm. The protein resides in the cytoskeleton. Its subcellular location is the microtubule organizing center. It localises to the centrosome. It is found in the spindle. It carries out the reaction L-seryl-[protein] + ATP = O-phospho-L-seryl-[protein] + ADP + H(+). The enzyme catalyses L-threonyl-[protein] + ATP = O-phospho-L-threonyl-[protein] + ADP + H(+). With respect to regulation, activated by tyrosine phosphorylation during the M phase of the meiotic cell cycle. Dephosphorylated and inactivated by DUSP1. Serine/threonine kinase which acts as an essential component of the MAP kinase signal transduction pathway. Plays an important role in the MAPK/ERK cascade. Depending on the cellular context, this cascade mediates diverse biological functions such as cell growth, adhesion, survival and differentiation through the regulation of transcription, translation, cytoskeletal rearrangements. The MAPK/ERK cascade also plays a role in initiation and regulation of meiosis, mitosis, and postmitotic functions in differentiated cells by phosphorylating a number of transcription factors. Many of the substrates are localized in the nucleus, and seem to participate in the regulation of transcription upon stimulation. However, other substrates are found in the cytosol as well as in other cellular organelles, and those are responsible for processes such as translation, mitosis and apoptosis. Moreover, the MAPK/ERK cascade is also involved in the regulation of the endosomal dynamics, including lysosome processing and endosome cycling through the perinuclear recycling compartment (PNRC); as well as in the fragmentation of the Golgi apparatus during mitosis. Phosphorylates microtubule-associated protein 2 (MAP2), myelin basic protein (MBP) and Elk-1. Phosphorylates dual specificity protein phosphatase 1 (DUSP1) during meiosis, increasing its stability. Activated by M phase promoting factor (MPF). Plays a role in the spindle assembly checkpoint. This chain is Mitogen-activated protein kinase 1 (mapk1), found in Xenopus laevis (African clawed frog).